A 1071-amino-acid chain; its full sequence is Methionine S-methyltransferase (1071 aa).

Ala-2 carries the N-acetylalanine modification.

The protein belongs to the class I-like SAM-binding methyltransferase superfamily. In terms of assembly, homotetramer. As to expression, expressed in roots, rosette leaves and cauline leaves. Expressed at a lower level in developing seeds.

Its subcellular location is the cytoplasm. It carries out the reaction L-methionine + S-adenosyl-L-methionine = S-methyl-L-methionine + S-adenosyl-L-homocysteine. In terms of biological role, catalyzes the S-methylmethionine (SMM) biosynthesis from adenosyl-L-homocysteine (AdoMet) and methionine. SMM biosynthesis (by MMT1) and degradation (by HMT-1, HMT-2 and HMT-3) constitute the SMM cycle in plants, which is probably required to achieve short term control of AdoMet level. Also able to catalyze the selenium-methylmethionine (SeMM) from AdoMet and selenium-methionine (SeMet). May play a role in phoem sulfur transport; such function is however not essential. This Arabidopsis thaliana (Mouse-ear cress) protein is Methionine S-methyltransferase (MMT1).